The primary structure comprises 137 residues: Ribosome-binding factor A (137 aa).

The interval 112 to 137 (KKDEVKEDESHEDESTDHTEETNEEP) is disordered. Residues 127–137 (TDHTEETNEEP) show a composition bias toward basic and acidic residues.

This sequence belongs to the RbfA family. Monomer. Binds 30S ribosomal subunits, but not 50S ribosomal subunits or 70S ribosomes.

It is found in the cytoplasm. In terms of biological role, one of several proteins that assist in the late maturation steps of the functional core of the 30S ribosomal subunit. Associates with free 30S ribosomal subunits (but not with 30S subunits that are part of 70S ribosomes or polysomes). Required for efficient processing of 16S rRNA. May interact with the 5'-terminal helix region of 16S rRNA. The sequence is that of Ribosome-binding factor A from Coprothermobacter proteolyticus (strain ATCC 35245 / DSM 5265 / OCM 4 / BT).